The sequence spans 112 residues: Small ribosomal subunit protein uS11c (112 aa).

It belongs to the universal ribosomal protein uS11 family. In terms of assembly, part of the 30S ribosomal subunit.

It localises to the plastid. This chain is Small ribosomal subunit protein uS11c, found in Euglena longa (Euglenophycean alga).